A 155-amino-acid chain; its full sequence is Small ribosomal subunit protein uS7 (155 aa).

The protein belongs to the universal ribosomal protein uS7 family. As to quaternary structure, part of the 30S ribosomal subunit. Contacts proteins S9 and S11.

Its function is as follows. One of the primary rRNA binding proteins, it binds directly to 16S rRNA where it nucleates assembly of the head domain of the 30S subunit. Is located at the subunit interface close to the decoding center, probably blocks exit of the E-site tRNA. The sequence is that of Small ribosomal subunit protein uS7 from Thioalkalivibrio sulfidiphilus (strain HL-EbGR7).